Consider the following 557-residue polypeptide: uncharacterized protein (557 aa).

A signal peptide spans 1-30 (MAPRRRRHTRIAGLRVVGTATLVAATTLTA). Cysteine 31 carries the N-palmitoyl cysteine lipid modification. Cysteine 31 carries S-diacylglycerol cysteine lipidation.

The protein to M.bovis Mb2616c and M.leprae ML0489.

It is found in the cell membrane. This is an uncharacterized protein from Mycobacterium tuberculosis (strain CDC 1551 / Oshkosh).